We begin with the raw amino-acid sequence, 79 residues long: Acyl carrier protein (79 aa).

Residues 2 to 77 (SDIAERVKKI…DAVKFLEKNS (76 aa)) form the Carrier domain. O-(pantetheine 4'-phosphoryl)serine is present on serine 37.

Belongs to the acyl carrier protein (ACP) family. 4'-phosphopantetheine is transferred from CoA to a specific serine of apo-ACP by AcpS. This modification is essential for activity because fatty acids are bound in thioester linkage to the sulfhydryl of the prosthetic group.

The protein resides in the cytoplasm. It participates in lipid metabolism; fatty acid biosynthesis. Functionally, carrier of the growing fatty acid chain in fatty acid biosynthesis. The polypeptide is Acyl carrier protein (Methylobacterium radiotolerans (strain ATCC 27329 / DSM 1819 / JCM 2831 / NBRC 15690 / NCIMB 10815 / 0-1)).